We begin with the raw amino-acid sequence, 432 residues long: Serine--tRNA ligase (432 aa).

T230–E232 serves as a coordination point for L-serine. R261–E263 serves as a coordination point for ATP. E284 lines the L-serine pocket. E348 to S351 provides a ligand contact to ATP. S383 is a binding site for L-serine.

The protein belongs to the class-II aminoacyl-tRNA synthetase family. Type-1 seryl-tRNA synthetase subfamily. Homodimer. The tRNA molecule binds across the dimer.

The protein localises to the cytoplasm. It catalyses the reaction tRNA(Ser) + L-serine + ATP = L-seryl-tRNA(Ser) + AMP + diphosphate + H(+). The enzyme catalyses tRNA(Sec) + L-serine + ATP = L-seryl-tRNA(Sec) + AMP + diphosphate + H(+). It participates in aminoacyl-tRNA biosynthesis; selenocysteinyl-tRNA(Sec) biosynthesis; L-seryl-tRNA(Sec) from L-serine and tRNA(Sec): step 1/1. In terms of biological role, catalyzes the attachment of serine to tRNA(Ser). Is also able to aminoacylate tRNA(Sec) with serine, to form the misacylated tRNA L-seryl-tRNA(Sec), which will be further converted into selenocysteinyl-tRNA(Sec). In Limosilactobacillus fermentum (strain NBRC 3956 / LMG 18251) (Lactobacillus fermentum), this protein is Serine--tRNA ligase.